An 89-amino-acid polypeptide reads, in one-letter code: Small ribosomal subunit protein bS20 (89 aa).

The tract at residues 1–20 (MANHKSAEKRARQTIKRTER) is disordered.

This sequence belongs to the bacterial ribosomal protein bS20 family.

Functionally, binds directly to 16S ribosomal RNA. In Campylobacter concisus (strain 13826), this protein is Small ribosomal subunit protein bS20.